Here is a 429-residue protein sequence, read N- to C-terminus: MIDPNLLRNNLEETAQKLKEKRNFILDVKQLRKLEEQRKALQVKTETLQAERNLRSKAIGAAKARGENIESLLNEVDHLGIELAQAKALFDDVSAELNTILLTIPNIPADEVPQGKDDTENQEVARWGTPRTFDFEVKDHVTLGENIDGLDFSAGVKLSGARFAVMKGRIAKLHRALAQFMLDLHTEKHGYLETYVPYLVNHTTLYGTGQLPKFGEDLFHTKALEGEQPYALIPTAEVPVTNLVRDEILSVENLPLKMTAHTPCFRSEAGSYGRDTRGLIRMHQFDKVEMVQIVEPEKSMEALEELTGHAEEVLRLLNLPYRKVLLCSGDMGFGACKTYDLEVWLPAQNTYREISSCSNMWDFQARRMQARCRAKGDKKTRLVHTLNGSGLAVGRTLVAVLENYQNADGSITVPEVLRPYMDNVDTIGR.

235 to 237 (TAE) contributes to the L-serine binding site. Residue 266 to 268 (RSE) coordinates ATP. Position 289 (glutamate 289) interacts with L-serine. 353 to 356 (EISS) lines the ATP pocket. An L-serine-binding site is contributed by serine 389.

The protein belongs to the class-II aminoacyl-tRNA synthetase family. Type-1 seryl-tRNA synthetase subfamily. In terms of assembly, homodimer. The tRNA molecule binds across the dimer.

Its subcellular location is the cytoplasm. The catalysed reaction is tRNA(Ser) + L-serine + ATP = L-seryl-tRNA(Ser) + AMP + diphosphate + H(+). It carries out the reaction tRNA(Sec) + L-serine + ATP = L-seryl-tRNA(Sec) + AMP + diphosphate + H(+). It functions in the pathway aminoacyl-tRNA biosynthesis; selenocysteinyl-tRNA(Sec) biosynthesis; L-seryl-tRNA(Sec) from L-serine and tRNA(Sec): step 1/1. Its function is as follows. Catalyzes the attachment of serine to tRNA(Ser). Is also able to aminoacylate tRNA(Sec) with serine, to form the misacylated tRNA L-seryl-tRNA(Sec), which will be further converted into selenocysteinyl-tRNA(Sec). The sequence is that of Serine--tRNA ligase from Actinobacillus succinogenes (strain ATCC 55618 / DSM 22257 / CCUG 43843 / 130Z).